The primary structure comprises 332 residues: Transaldolase (332 aa).

The Schiff-base intermediate with substrate role is filled by Lys135.

This sequence belongs to the transaldolase family. Type 1 subfamily. In terms of assembly, homodimer.

It localises to the cytoplasm. The enzyme catalyses D-sedoheptulose 7-phosphate + D-glyceraldehyde 3-phosphate = D-erythrose 4-phosphate + beta-D-fructose 6-phosphate. It functions in the pathway carbohydrate degradation; pentose phosphate pathway; D-glyceraldehyde 3-phosphate and beta-D-fructose 6-phosphate from D-ribose 5-phosphate and D-xylulose 5-phosphate (non-oxidative stage): step 2/3. In terms of biological role, transaldolase is important for the balance of metabolites in the pentose-phosphate pathway. In Prochlorococcus marinus (strain NATL1A), this protein is Transaldolase.